A 213-amino-acid polypeptide reads, in one-letter code: Pyridoxine/pyridoxamine 5'-phosphate oxidase (213 aa).

Residues 8 to 11 (RKNY) and Lys66 contribute to the substrate site. Residues 61 to 66 (RIVLIK), 76 to 77 (FT), Arg82, Lys83, and Gln105 contribute to the FMN site. The substrate site is built by Tyr123, Arg127, and Ser131. FMN is bound by residues 140 to 141 (QS) and Trp184. 190 to 192 (RLH) is a binding site for substrate. Residue Arg194 coordinates FMN.

It belongs to the pyridoxamine 5'-phosphate oxidase family. Homodimer. Requires FMN as cofactor.

The catalysed reaction is pyridoxamine 5'-phosphate + O2 + H2O = pyridoxal 5'-phosphate + H2O2 + NH4(+). It carries out the reaction pyridoxine 5'-phosphate + O2 = pyridoxal 5'-phosphate + H2O2. The protein operates within cofactor metabolism; pyridoxal 5'-phosphate salvage; pyridoxal 5'-phosphate from pyridoxamine 5'-phosphate: step 1/1. Its pathway is cofactor metabolism; pyridoxal 5'-phosphate salvage; pyridoxal 5'-phosphate from pyridoxine 5'-phosphate: step 1/1. Functionally, catalyzes the oxidation of either pyridoxine 5'-phosphate (PNP) or pyridoxamine 5'-phosphate (PMP) into pyridoxal 5'-phosphate (PLP). This chain is Pyridoxine/pyridoxamine 5'-phosphate oxidase, found in Paraburkholderia xenovorans (strain LB400).